Consider the following 223-residue polypeptide: Cutinase 4 (223 aa).

The signal sequence occupies residues 1 to 26 (MPLPLLPPLLLPLEALLDLALHLVDS). Cys60 and Cys133 are oxidised to a cystine. The active-site Nucleophile is the Ser144. Residues Cys187 and Cys194 are joined by a disulfide bond. Residue Asp191 is part of the active site. His203 functions as the Proton donor/acceptor in the catalytic mechanism.

It belongs to the cutinase family. Post-translationally, the 2 disulfide bonds play a critical role in holding the catalytic residues in juxta-position; reduction of the disulfide bridges results in the complete inactivation of the enzyme.

The protein resides in the secreted. The enzyme catalyses cutin + H2O = cutin monomers.. In terms of biological role, catalyzes the hydrolysis of complex carboxylic polyesters found in the cell wall of plants. Degrades cutin, a macromolecule that forms the structure of the plant cuticle. Also degrades suberin, a specialized macromolecule found in the cell wall of various plant tissues. In Emericella nidulans (strain FGSC A4 / ATCC 38163 / CBS 112.46 / NRRL 194 / M139) (Aspergillus nidulans), this protein is Cutinase 4.